Consider the following 162-residue polypeptide: Shikimate kinase (162 aa).

Position 10 to 15 (10 to 15) interacts with ATP; the sequence is GAGKST. S14 serves as a coordination point for Mg(2+). 3 residues coordinate substrate: D28, R52, and G73. R113 contacts ATP. A substrate-binding site is contributed by R129.

The protein belongs to the shikimate kinase family. In terms of assembly, monomer. It depends on Mg(2+) as a cofactor.

The protein resides in the cytoplasm. It carries out the reaction shikimate + ATP = 3-phosphoshikimate + ADP + H(+). It functions in the pathway metabolic intermediate biosynthesis; chorismate biosynthesis; chorismate from D-erythrose 4-phosphate and phosphoenolpyruvate: step 5/7. Its function is as follows. Catalyzes the specific phosphorylation of the 3-hydroxyl group of shikimic acid using ATP as a cosubstrate. The chain is Shikimate kinase from Lactococcus lactis subsp. lactis (strain IL1403) (Streptococcus lactis).